The following is a 1254-amino-acid chain: Structural polyprotein (1254 aa).

Residues Met1–Phe33 form a necessary for nucleocapsid assembly and virus assembly region. The segment at Phe33–Arg68 is host transcription inhibition. A Supraphysiological nuclear export signal motif is present at residues Leu41–Leu48. Residue Asn47 is glycosylated (N-linked (GlcNAc...) asparagine; by host). The segment at Leu48 to Val118 is disordered. The short motif at Lys64–Arg68 is the Nuclear localization signal element. The span at Gly76 to Lys91 shows a compositional bias: basic residues. The segment at Ala90–Thr126 is binding to the viral RNA. Residues Thr92 and Thr107 each carry the phosphothreonine modification. Residues Asn103 to Met117 show a composition bias toward basic residues. Residues Pro111–Lys125 form a ribosome-binding region. Ser123 carries the post-translational modification Phosphoserine. One can recognise a Peptidase S3 domain in the interval Lys125 to Trp274. A Phosphothreonine modification is found at Thr126. His151 acts as the Charge relay system in catalysis. The segment at Lys167–Tyr172 is interaction with spike glycoprotein E2. Active-site charge relay system residues include Asp173 and Ser225. The interval Glu259–Thr263 is interaction with spike glycoprotein E2. Residues Ser275 to Val286 are functions as an uncleaved signal peptide for the precursor of protein E3/E2. Residues Ser275–Thr702 lie on the Extracellular side of the membrane. 7 cysteine pairs are disulfide-bonded: Cys281/Cys290, Cys352/Cys456, Cys355/Cys360, Cys423/Cys437, Cys484/Cys599, Cys533/Cys559, and Cys535/Cys553. N-linked (GlcNAc...) asparagine; by host glycosylation occurs at Asn285. Residues Asn545 and Asn651 are each glycosylated (N-linked (GlcNAc...) asparagine; by host). A helical membrane pass occupies residues Gly703–Cys723. The tract at residues Arg724–Ser728 is interaction with the capsid protein. The Cytoplasmic portion of the chain corresponds to Arg724–Ala756. 3 S-palmitoyl cysteine; by host lipidation sites follow: Cys729, Cys749, and Cys750. Cys729 and Cys750 form a disulfide bridge. The transient transmembrane before p62-6K protein processing stretch occupies residues Leu735–Ala754. The Extracellular segment spans residues Glu757–Asn768. A helical transmembrane segment spans residues Asn769–Thr789. A topological domain (cytoplasmic) is located at residue Arg790. The helical transmembrane segment at Leu791 to Gly811 threads the bilayer. Over Ala812–Ser1224 the chain is Extracellular. Cystine bridges form between Cys861–Cys926, Cys874–Cys906, Cys875–Cys908, and Cys880–Cys890. An E1 fusion peptide loop region spans residues Val896–Thr913. Asn946 and Asn1082 each carry an N-linked (GlcNAc...) asparagine; by host glycan. 4 disulfide bridges follow: Cys1071–Cys1083, Cys1113–Cys1188, Cys1118–Cys1192, and Cys1140–Cys1182. Residues Leu1225–Met1245 traverse the membrane as a helical segment. At Tyr1246–Asn1254 the chain is on the cytoplasmic side.

As to quaternary structure, homodimer. Homomultimer. Interacts with host karyopherin KPNA4; this interaction allows the nuclear import of the viral capsid protein. Interacts with spike glycoprotein E2. Interacts with host IRAK1; the interaction leads to inhibition of IRAK1-dependent signaling. Part of a tetrameric complex composed of host CRM1, host importin alpha/beta dimer and the viral capsid; this complex blocks the receptor-mediated transport through the nuclear pore. Interacts with host phosphatase PPP1CA; this interaction dephosphorylates the capsid protein, which increases its ability to bind to the viral genome. In terms of assembly, the precursor of protein E3/E2 and E1 form a heterodimer shortly after synthesis. Interacts with spike glycoprotein E2. The precursor of protein E3/E2 and E1 form a heterodimer shortly after synthesis. Processing of the precursor of protein E3/E2 into E2 and E3 results in a heterodimer of the spike glycoproteins E2 and E1. Spike at virion surface are constituted of three E2-E1 heterodimers. After target cell attachment and endocytosis, E1 change conformation to form homotrimers. Interacts with 6K protein. Interacts with host LDLRAD3; this interaction mediates viral entry to the host cell. As to quaternary structure, interacts with spike glycoprotein E1. Processing of the precursor of protein E3/E2 into E2 and E3 results in a heterodimer of the spike glycoproteins E2 and E1. Spike at virion surface are constituted of a trimer of E2-E1 heterodimers. Interacts with 6K protein. Interacts with host LDLRAD3; this interaction mediates viral entry to the host cell. In terms of assembly, oligomer. Interacts with spike glycoprotein E1. Interacts with spike glycoprotein E2. Post-translationally, structural polyprotein: Specific enzymatic cleavages in vivo yield mature proteins. Capsid protein is auto-cleaved during polyprotein translation, unmasking a signal peptide at the N-terminus of the precursor of E3/E2. The remaining polyprotein is then targeted to the host endoplasmic reticulum, where host signal peptidase cleaves it into pE2, 6K and E1 proteins. pE2 is further processed to mature E3 and E2 by host furin in trans-Golgi vesicle. In terms of processing, phosphorylated on serine and threonine residues. Palmitoylated via thioester bonds. These palmitoylations may induce disruption of the C-terminus transmembrane. This would result in the reorientation of E2 C-terminus from lumenal to cytoplasmic side. Post-translationally, N-glycosylated. In terms of processing, palmitoylated via thioester bonds.

It is found in the virion. It localises to the host cytoplasm. The protein localises to the host cell membrane. The protein resides in the host nucleus. Its subcellular location is the virion membrane. It is found in the host Golgi apparatus. It localises to the host trans-Golgi network. The protein localises to the host endoplasmic reticulum. The enzyme catalyses Autocatalytic release of the core protein from the N-terminus of the togavirus structural polyprotein by hydrolysis of a -Trp-|-Ser- bond.. In terms of biological role, forms an icosahedral capsid with a T=4 symmetry composed of 240 copies of the capsid protein surrounded by a lipid membrane through which penetrate 80 spikes composed of trimers of E1-E2 heterodimers. The capsid protein binds to the viral RNA genome at a site adjacent to a ribosome binding site for viral genome translation following genome release. Possesses a protease activity that results in its autocatalytic cleavage from the nascent structural protein. Following its self-cleavage, the capsid protein transiently associates with ribosomes, and within several minutes the protein binds to viral RNA and rapidly assembles into icosahedric core particles. The resulting nucleocapsid eventually associates with the cytoplasmic domain of the spike glycoprotein E2 at the cell membrane, leading to budding and formation of mature virions. In case of infection, new virions attach to target cells and after clathrin-mediated endocytosis their membrane fuses with the host endosomal membrane. This leads to the release of the nucleocapsid into the cytoplasm, followed by an uncoating event necessary for the genomic RNA to become accessible. The uncoating might be triggered by the interaction of capsid proteins with ribosomes. Binding of ribosomes would release the genomic RNA since the same region is genomic RNA-binding and ribosome-binding. Specifically inhibits interleukin-1 receptor-associated kinase 1/IRAK1-dependent signaling during viral entry, representing a means by which the alphaviruses may evade innate immune detection and activation prior to viral gene expression. Inhibits host transcription. Forms a tetrameric complex with XPO1/CRM1 and the nuclear import receptor importin. This complex blocks the central channel of host nuclear pores thereby inhibiting the receptor-mediated nuclear transport and thus the host mRNA and rRNA transcription. The inhibition of transcription is linked to a cytopathic effect on the host cell. Provides the signal sequence for the translocation of the precursor of protein E3/E2 to the host endoplasmic reticulum. Furin-cleaved E3 remains associated with spike glycoprotein E1 and mediates pH protection of the latter during the transport via the secretory pathway. After virion release from the host cell, the assembly protein E3 is gradually released in the extracellular space. Its function is as follows. Plays a role in viral attachment to target host cell, by binding to the cell receptor LDLRAD3. Synthesized as a p62 precursor which is processed by furin at the cell membrane just before virion budding, giving rise to E2-E1 heterodimer. The p62-E1 heterodimer is stable, whereas E2-E1 is unstable and dissociate at low pH. p62 is processed at the last step, presumably to avoid E1 fusion activation before its final export to cell surface. E2 C-terminus contains a transitory transmembrane that would be disrupted by palmitoylation, resulting in reorientation of the C-terminal tail from lumenal to cytoplasmic side. This step is critical since E2 C-terminus is involved in budding by interacting with capsid proteins. This release of E2 C-terminus in cytoplasm occurs lately in protein export, and precludes premature assembly of particles at the endoplasmic reticulum membrane. Functionally, acts as a viroporin that participates in virus glycoprotein processing and transport to the plasma membrane, cell permeabilization and budding of viral particles. Disrupts the calcium homeostasis of the cell, probably at the endoplasmic reticulum level. This leads to cytoplasmic calcium elevation. Because of its lipophilic properties, the 6K protein is postulated to influence the selection of lipids that interact with the transmembrane domains of the glycoproteins, which, in turn, affects the deformability of the bilayer required for the extreme curvature that occurs as budding proceeds. Present in low amount in virions, about 3% compared to viral glycoproteins. In terms of biological role, class II viral fusion protein. Fusion activity is inactive as long as E1 is bound to E2 in mature virion. After virus attachment to cell receptor LDLRAD3 and endocytosis, acidification of the endosome induce dissociation of E1/E2 heterodimer and concomitant trimerization of the E1 subunits. This E1 trimer is fusion active, and promotes release of viral nucleocapsid in cytoplasm after endosome and viral membrane fusion. Efficient fusion requires the presence of cholesterol and sphingolipid in the target membrane. This chain is Structural polyprotein, found in Venezuelan equine encephalitis virus (strain Everglades Fe3-7c) (VEEV).